The sequence spans 483 residues: Alginate biosynthesis protein AlgA (483 aa).

Belongs to the mannose-6-phosphate isomerase type 2 family. In terms of assembly, monomer. Co(2+) is required as a cofactor.

The catalysed reaction is D-mannose 6-phosphate = D-fructose 6-phosphate. It carries out the reaction alpha-D-mannose 1-phosphate + GTP + H(+) = GDP-alpha-D-mannose + diphosphate. It participates in nucleotide-sugar biosynthesis; GDP-alpha-D-mannose biosynthesis; GDP-alpha-D-mannose from alpha-D-mannose 1-phosphate (GTP route): step 1/1. It functions in the pathway nucleotide-sugar biosynthesis; GDP-alpha-D-mannose biosynthesis; alpha-D-mannose 1-phosphate from D-fructose 6-phosphate: step 1/2. In terms of biological role, produces a precursor for alginate polymerization. The alginate layer provides a protective barrier against host immune defenses and antibiotics. The chain is Alginate biosynthesis protein AlgA (algA) from Pseudomonas fluorescens.